Here is a 440-residue protein sequence, read N- to C-terminus: Proline--tRNA ligase (440 aa).

It belongs to the class-II aminoacyl-tRNA synthetase family. ProS type 2 subfamily. As to quaternary structure, homodimer.

The protein localises to the cytoplasm. The enzyme catalyses tRNA(Pro) + L-proline + ATP = L-prolyl-tRNA(Pro) + AMP + diphosphate. In terms of biological role, catalyzes the attachment of proline to tRNA(Pro) in a two-step reaction: proline is first activated by ATP to form Pro-AMP and then transferred to the acceptor end of tRNA(Pro). The polypeptide is Proline--tRNA ligase (Methylocella silvestris (strain DSM 15510 / CIP 108128 / LMG 27833 / NCIMB 13906 / BL2)).